A 106-amino-acid polypeptide reads, in one-letter code: MMKVLVVAALLVTLISYSSSEGIDDLEADELLSLMANEQTRAKACTPRYYDCSHDRHSCCRSSMFKDVCTCFYPEGGDNKEVCTCQQPKHLKYMEKATDKIKNLFG.

A signal peptide spans 1-20; sequence MMKVLVVAALLVTLISYSSS. Residues 21-41 constitute a propeptide that is removed on maturation; that stretch reads EGIDDLEADELLSLMANEQTR. Disulfide bonds link C45–C60, C52–C69, C59–C85, and C71–C83.

It belongs to the neurotoxin 19 (CSTX) family. 02 (D7) subfamily. In terms of tissue distribution, expressed by the venom gland.

It is found in the secreted. This chain is Toxin-like structure LSTX-D6, found in Lycosa singoriensis (Wolf spider).